The following is a 635-amino-acid chain: Protein phosphatase PP2A regulatory subunit A (635 aa).

A compositionally biased stretch (low complexity) spans 1-27; that stretch reads MSGARSTTAGAVPSAATTSTTSTTSNS. The interval 1–33 is disordered; the sequence is MSGARSTTAGAVPSAATTSTTSTTSNSKDSDSN. HEAT repeat units lie at residues 34 to 72, 73 to 111, 112 to 150, 151 to 189, 190 to 228, 229 to 273, 274 to 316, 317 to 356, 357 to 395, 396 to 434, 435 to 473, 474 to 512, 513 to 553, 554 to 598, and 599 to 632; these read ESLY…GPER, TRNE…GGPQ, YATI…SQEQ, LFSD…KDDS, LRKN…TQNL, GLST…NAKG, DESH…SNQA, YIDE…DPSI, ILNK…NKDQ, VINN…GIEL, LSDS…GMQF, FDQQ…GSDW, CRDE…SLDV, VTEQ…YDAL, and IKNT…CQEL.

Belongs to the phosphatase 2A regulatory subunit A family. As to quaternary structure, PP2A exists in several trimeric forms, all of which consist of a core composed of a catalytic subunit associated with a 65 kDa regulatory subunit (PR65) (subunit A). The core complex associates with a third, variable subunit (subunit B), which confers distinct properties to the holoenzyme.

In terms of biological role, phosphatase 2A affects a variety of biological processes in the cell such as transcription, cell cycle progression and cellular morphogenesis, and provides an initial identification of critical substrates for this phosphatase. The regulatory subunit may direct the catalytic subunit to distinct, albeit overlapping, subsets of substrates. The polypeptide is Protein phosphatase PP2A regulatory subunit A (TPD3) (Saccharomyces cerevisiae (strain ATCC 204508 / S288c) (Baker's yeast)).